We begin with the raw amino-acid sequence, 42 residues long: F420-non-reducing hydrogenase vhu subunit U (42 aa).

The Ni(2+) site is built by Sec21 and Cys24. A non-standard amino acid (selenocysteine) is located at residue Sec21. Residues 28–42 (VLDRVKFRIERKDED) constitute a propeptide, removed in mature form.

This sequence belongs to the [NiFe]/[NiFeSe] hydrogenase large subunit family. In terms of assembly, the F420-non-reducing hydrogenase vhu is composed of four subunits; VhuA, VhuD, VhuG and VhuU. Requires Ni(2+) as cofactor.

This Methanopyrus kandleri (strain AV19 / DSM 6324 / JCM 9639 / NBRC 100938) protein is F420-non-reducing hydrogenase vhu subunit U (vhuU).